Consider the following 118-residue polypeptide: NADH-quinone oxidoreductase subunit A (118 aa).

Transmembrane regions (helical) follow at residues 8-28 (ILIF…LNYL), 61-81 (FMYA…YPWA), and 86-106 (VLGL…VLGL).

Belongs to the complex I subunit 3 family. In terms of assembly, NDH-1 is composed of 14 different subunits. Subunits NuoA, H, J, K, L, M, N constitute the membrane sector of the complex.

The protein localises to the cell membrane. It carries out the reaction a quinone + NADH + 5 H(+)(in) = a quinol + NAD(+) + 4 H(+)(out). Functionally, NDH-1 shuttles electrons from NADH, via FMN and iron-sulfur (Fe-S) centers, to quinones in the respiratory chain. The immediate electron acceptor for the enzyme in this species is believed to be a menaquinone. Couples the redox reaction to proton translocation (for every two electrons transferred, four hydrogen ions are translocated across the cytoplasmic membrane), and thus conserves the redox energy in a proton gradient. This Carboxydothermus hydrogenoformans (strain ATCC BAA-161 / DSM 6008 / Z-2901) protein is NADH-quinone oxidoreductase subunit A.